Consider the following 246-residue polypeptide: PARP-type zinc finger-containing protein C2A9.07c (246 aa).

The PARP-type; degenerate zinc-finger motif lies at 8–99 (YRVELAKTGR…EKILRAFEQG (92 aa)). The segment covering 103–126 (EEDEERCRKMASDASEEKDRKIEE) has biased composition (basic and acidic residues). The disordered stretch occupies residues 103–246 (EEDEERCRKM…ESGNEYSDSD (144 aa)). Residue Thr-130 is modified to Phosphothreonine. Ser-131 bears the Phosphoserine mark. Basic residues predominate over residues 157-168 (NKKHKAERKRSP). Over residues 175 to 184 (LEDDEEIEDV) the composition is skewed to acidic residues. Basic and acidic residues predominate over residues 185–196 (ASDKDEEEKPWS). Positions 197–215 (GDEEDDDELVVKDSEDETE) are enriched in acidic residues. Residues Ser-243 and Ser-245 each carry the phosphoserine modification.

It localises to the nucleus. It is found in the mitochondrion. The protein is PARP-type zinc finger-containing protein C2A9.07c of Schizosaccharomyces pombe (strain 972 / ATCC 24843) (Fission yeast).